The following is a 393-amino-acid chain: ATP phosphoribosyltransferase regulatory subunit (393 aa).

The protein belongs to the class-II aminoacyl-tRNA synthetase family. HisZ subfamily. As to quaternary structure, heteromultimer composed of HisG and HisZ subunits.

The protein resides in the cytoplasm. It participates in amino-acid biosynthesis; L-histidine biosynthesis; L-histidine from 5-phospho-alpha-D-ribose 1-diphosphate: step 1/9. Required for the first step of histidine biosynthesis. May allow the feedback regulation of ATP phosphoribosyltransferase activity by histidine. The polypeptide is ATP phosphoribosyltransferase regulatory subunit (Synechococcus sp. (strain RCC307)).